The primary structure comprises 318 residues: uncharacterized protein (318 aa).

This sequence belongs to the NAD(P)-dependent epimerase/dehydratase family.

This is an uncharacterized protein from Staphylococcus haemolyticus (strain JCSC1435).